The chain runs to 264 residues: Small ribosomal subunit protein uS2 (264 aa).

This sequence belongs to the universal ribosomal protein uS2 family.

In Latilactobacillus sakei subsp. sakei (strain 23K) (Lactobacillus sakei subsp. sakei), this protein is Small ribosomal subunit protein uS2.